Here is a 647-residue protein sequence, read N- to C-terminus: MTQILSRISNPGDLQRLSATELDQLAKEIREVIIQTTSKNGGHLAPNLGVVELTLALHLVFQSPKDKIIWDVGHQSYVHKLLTGRYNHFHTLRRYKGMAGFPKRSESEHDVFNTGHSSTSISAALGFAFARDLKKEDGAVIAVIGDGALTGGIALEALNHAGHAGNDMIVVLNDNEKSIADNVGAMSTYLSRIRTDPRYFRNKEEVEEIVRRIPSIGNHVLKVMEKMKDSFKHLVVPGILFEELGFSYLGPIDGHNLSQLREVMTNACRLKGPILVHVLTKKGKGYGPAETNPSVFHGVGPFDVETGKVKKHLGPPTYTQVFSDTLLRLAREDERIVGVTAAMPDGTGMTPFARAFPSRFFDVGIAEQHAVNMSAALALQGLKPVVAIYSTFLQRAYDQVFHDVCLQRAPVVFAIDRGGIVGDDGETHHGLFDIAFLRHIPELVMMAPKDENELQHMLRTALEYEGPIAVRYPRGTGVGVTLDEELTTVPIGRGELLRQGSDVTIVAIGAMVGIAEEAADLLEAEGIRAAVVNARFVKPLDKELIIKQARETGRIVTVEEHVLAGGFGSAILELLEMEGVHCAVRRIGIPDEYVQHGSVSVLREDYGLTASNVARVARELADADRSRASIRMAPPAPIKIAFRGESR.

Thiamine diphosphate-binding positions include His74 and 115 to 117 (GHS). Asp146 is a Mg(2+) binding site. Residues 147–148 (GA), Asn175, Tyr286, and Glu367 contribute to the thiamine diphosphate site. Mg(2+) is bound at residue Asn175.

Belongs to the transketolase family. DXPS subfamily. Homodimer. Requires Mg(2+) as cofactor. It depends on thiamine diphosphate as a cofactor.

It catalyses the reaction D-glyceraldehyde 3-phosphate + pyruvate + H(+) = 1-deoxy-D-xylulose 5-phosphate + CO2. Its pathway is metabolic intermediate biosynthesis; 1-deoxy-D-xylulose 5-phosphate biosynthesis; 1-deoxy-D-xylulose 5-phosphate from D-glyceraldehyde 3-phosphate and pyruvate: step 1/1. Its function is as follows. Catalyzes the acyloin condensation reaction between C atoms 2 and 3 of pyruvate and glyceraldehyde 3-phosphate to yield 1-deoxy-D-xylulose-5-phosphate (DXP). This is 1-deoxy-D-xylulose-5-phosphate synthase from Heliobacterium modesticaldum (strain ATCC 51547 / Ice1).